The primary structure comprises 564 residues: Kelch repeat and BTB domain-containing protein 1 (564 aa).

Residues 21–88 (CDIDIVINDE…IYGIPLSLTN (68 aa)) enclose the BTB domain. The BACK domain maps to 123–219 (CIDFYIYADK…SLLSPQVIKS (97 aa)). Kelch repeat units lie at residues 252–297 (IELI…VLDN), 298–346 (IIYM…ADDE), 347–395 (YIYC…MLNG), 397–441 (IYVI…VHAG), 442–492 (KIYI…SVHN), and 494–539 (LYVG…CEPI).

Interacts (via BTB domain) with host CUL3.

Its subcellular location is the host cytoplasm. Its function is as follows. Probable substrate-specific adapter of CUL3-containing E3 ubiquitin-protein ligases which mediate the ubiquitination and subsequent proteasomal degradation of host target proteins. The protein is Kelch repeat and BTB domain-containing protein 1 (KBTB1) of Camelus.